A 1262-amino-acid chain; its full sequence is Cytoplasmic FMR1-interacting protein homolog (1262 aa).

The interval 519–550 (LNRMTDVKGKKKSSAPKGDSANSSSSDIRIPR) is disordered.

This sequence belongs to the CYFIP family. As to quaternary structure, interacts with gex-3.

The protein resides in the cytoplasm. Functionally, required for initial steps of body morphogenesis. May play a role in egg laying and yolk protein clatherin-mediated endocytosis by oocytes during oogenesis. Plays a role in the formation of muscle connections, also called muscle arm extensions, between the body wall and the motor axons in the dorsal and ventral cord. The chain is Cytoplasmic FMR1-interacting protein homolog from Caenorhabditis elegans.